The following is a 568-amino-acid chain: Periplasmic trehalase (568 aa).

A signal peptide spans 1–38; it reads MPHAPARSGDAMSAAAPPCCTSLLGLSLSMFVAPCALA. Substrate is bound by residues Arg-169, 176–177, Asn-213, 222–224, 294–296, and Gly-327; these read WD, RSQ, and RPE. Residues Asp-329 and Glu-511 each act as proton donor/acceptor in the active site. Position 526 (Glu-526) interacts with substrate.

It belongs to the glycosyl hydrolase 37 family.

The protein localises to the periplasm. The catalysed reaction is alpha,alpha-trehalose + H2O = alpha-D-glucose + beta-D-glucose. Functionally, provides the cells with the ability to utilize trehalose at high osmolarity by splitting it into glucose molecules that can subsequently be taken up by the phosphotransferase-mediated uptake system. The protein is Periplasmic trehalase of Xanthomonas campestris pv. campestris (strain 8004).